The primary structure comprises 265 residues: Apolipoprotein A-I (265 aa).

Positions 1 to 18 are cleaved as a signal peptide; that stretch reads MKAVLLTLAVLFLTGSQA. A run of 2 repeats spans residues 67–88 and 89–110. Positions 67 to 265 are 10 X approximate tandem repeats; sequence LKLLDNWDSL…DEASKKLNAQ (199 aa). The residue at position 109 (Met-109) is a Methionine sulfoxide. The stretch at 111 to 121 is one 3; half-length repeat; that stretch reads KDLEEVKQKVQ. 5 consecutive repeat copies span residues 122 to 142, 144 to 165, 166 to 187, 188 to 209, and 210 to 230. Residues 231–241 form a 9; half-length repeat; sequence PALEDLRQGLV. Residues 242–265 form repeat 10; the sequence is PVLESLKVSILAAIDEASKKLNAQ.

This sequence belongs to the apolipoprotein A1/A4/E family. As to quaternary structure, homodimer. Interacts with APOA1BP and CLU. Component of a sperm activating protein complex (SPAP), consisting of APOA1, an immunoglobulin heavy chain, an immunoglobulin light chain and albumin. Interacts with NDRG1. Interacts with SCGB3A2. Interacts with NAXE and YJEFN3. Glycosylated. In terms of processing, palmitoylated. Post-translationally, phosphorylation sites are present in the extracellular medium. Major protein of plasma HDL, also found in chylomicrons.

It localises to the secreted. In terms of biological role, participates in the reverse transport of cholesterol from tissues to the liver for excretion by promoting cholesterol efflux from tissues and by acting as a cofactor for the lecithin cholesterol acyltransferase (LCAT). As part of the SPAP complex, activates spermatozoa motility. This is Apolipoprotein A-I (APOA1) from Tursiops truncatus (Atlantic bottle-nosed dolphin).